The chain runs to 451 residues: Aminodeoxychorismate synthase component 1 (451 aa).

L-tryptophan-binding positions include serine 34, 41 to 44 (HNRF), and 238 to 240 (PFS). Glutamate 256 acts as the Proton donor in catalysis. Lysine 272 functions as the N6-(4-deoxychorismate)-lysine intermediate in the catalytic mechanism.

This sequence belongs to the anthranilate synthase component I family. Monomer. Heterodimer consisting of two non-identical subunits: a glutamine amidotransferase subunit (PabA) and a aminodeoxychorismate synthase subunit (PabB). Mg(2+) serves as cofactor.

The enzyme catalyses chorismate + L-glutamine = 4-amino-4-deoxychorismate + L-glutamate. Its pathway is cofactor biosynthesis; tetrahydrofolate biosynthesis; 4-aminobenzoate from chorismate: step 1/2. Functionally, part of a heterodimeric complex that catalyzes the two-step biosynthesis of 4-amino-4-deoxychorismate (ADC), a precursor of p-aminobenzoate (PABA) and tetrahydrofolate. In the first step, a glutamine amidotransferase (PabA) generates ammonia as a substrate that, along with chorismate, is used in the second step, catalyzed by aminodeoxychorismate synthase (PabB) to produce ADC. This is Aminodeoxychorismate synthase component 1 (pabB) from Klebsiella aerogenes (Enterobacter aerogenes).